Here is a 192-residue protein sequence, read N- to C-terminus: Ion-translocating oxidoreductase complex subunit A (192 aa).

Helical transmembrane passes span 5–25 (LLLL…FLGL), 39–59 (IGMS…SYLV), 65–85 (LPFD…AVVV), 102–122 (ALGI…VALL), 134–154 (AIYG…FSAM), and 171–191 (AIAM…TGLV).

The protein belongs to the NqrDE/RnfAE family. In terms of assembly, the complex is composed of six subunits: RnfA, RnfB, RnfC, RnfD, RnfE and RnfG.

The protein resides in the cell inner membrane. Part of a membrane-bound complex that couples electron transfer with translocation of ions across the membrane. This chain is Ion-translocating oxidoreductase complex subunit A, found in Shewanella baltica (strain OS185).